A 264-amino-acid polypeptide reads, in one-letter code: Acyl-[acyl-carrier-protein]--UDP-N-acetylglucosamine O-acyltransferase (264 aa).

This sequence belongs to the transferase hexapeptide repeat family. LpxA subfamily. Homotrimer.

It localises to the cytoplasm. It carries out the reaction a (3R)-hydroxyacyl-[ACP] + UDP-N-acetyl-alpha-D-glucosamine = a UDP-3-O-[(3R)-3-hydroxyacyl]-N-acetyl-alpha-D-glucosamine + holo-[ACP]. The protein operates within glycolipid biosynthesis; lipid IV(A) biosynthesis; lipid IV(A) from (3R)-3-hydroxytetradecanoyl-[acyl-carrier-protein] and UDP-N-acetyl-alpha-D-glucosamine: step 1/6. Involved in the biosynthesis of lipid A, a phosphorylated glycolipid that anchors the lipopolysaccharide to the outer membrane of the cell. The sequence is that of Acyl-[acyl-carrier-protein]--UDP-N-acetylglucosamine O-acyltransferase from Albidiferax ferrireducens (strain ATCC BAA-621 / DSM 15236 / T118) (Rhodoferax ferrireducens).